We begin with the raw amino-acid sequence, 1003 residues long: Glycine--tRNA ligase (1003 aa).

Residues 1–310 (MSSQPLTLQD…VTAKQIPHIC (310 aa)) form a glycine--tRNA ligase alpha subunit region. The tract at residues 311–1003 (QDEDFLLEIG…CFGFYAWDAL (693 aa)) is glycine--tRNA ligase beta subunit.

It belongs to the class-II aminoacyl-tRNA synthetase family.

The protein localises to the cytoplasm. It catalyses the reaction tRNA(Gly) + glycine + ATP = glycyl-tRNA(Gly) + AMP + diphosphate. The sequence is that of Glycine--tRNA ligase (glyQS) from Chlamydia muridarum (strain MoPn / Nigg).